The sequence spans 208 residues: Ras-related protein Rab-6A (208 aa).

An N-acetylserine modification is found at S2. Positions 23, 24, 25, 26, 27, 28, 39, 40, 42, and 45 each coordinate GTP. A Mg(2+)-binding site is contributed by T27. The short motif at 32 to 50 is the Switch 1 element; sequence RFMYDSFDNTYQATIGIDF. T45 and D68 together coordinate Mg(2+). A Switch 2 motif is present at residues 69-88; the sequence is TAGQERFRSLIPSYIRDSAA. GTP-binding residues include G71, N126, K127, D129, S156, A157, and K158. S-geranylgeranyl cysteine attachment occurs at residues C206 and C208. The residue at position 208 (C208) is a Cysteine methyl ester.

The protein belongs to the small GTPase superfamily. Rab family. It depends on Mg(2+) as a cofactor.

It localises to the golgi apparatus membrane. The enzyme catalyses GTP + H2O = GDP + phosphate + H(+). Regulated by guanine nucleotide exchange factors (GEFs) which promote the exchange of bound GDP for free GTP. Regulated by GTPase activating proteins (GAPs) which increase the GTP hydrolysis activity. Inhibited by GDP dissociation inhibitors (GDIs). Its function is as follows. The small GTPases Rab are key regulators of intracellular membrane trafficking, from the formation of transport vesicles to their fusion with membranes. Rabs cycle between an inactive GDP-bound form and an active GTP-bound form that is able to recruit to membranes different sets of downstream effectors directly responsible for vesicle formation, movement, tethering and fusion. RAB6A acts as a regulator of COPI-independent retrograde transport from the Golgi apparatus towards the endoplasmic reticulum (ER). This Gallus gallus (Chicken) protein is Ras-related protein Rab-6A (RAB6A).